A 34-amino-acid chain; its full sequence is MAQPTASAQKLVRPIRAVCRILQIPESDPSNLRP.

In terms of biological role, may function as an inhibitory translational control element that can negatively regulate protein translation of HR gene. In Homo sapiens (Human), this protein is Protein HRURF.